The chain runs to 343 residues: Zinc finger CCCH domain-containing protein 39 (343 aa).

Residues 114 to 147 adopt a coiled-coil conformation; it reads LSHLADAADEAAALRQENAELRVANNDLACRIAK. C3H1-type zinc fingers lie at residues 268-296 and 306-334; these read MFKTELCNKWEETGACPYGDQCQFAHGVA and RYKTQVCRMVLAGGVCPYGHRCHFRHSIT.

The chain is Zinc finger CCCH domain-containing protein 39 from Oryza sativa subsp. japonica (Rice).